The following is a 615-amino-acid chain: Nuclear receptor subfamily 1 group D member 1 (615 aa).

The span at 1–12 (MTTLDSNNNTGG) shows a compositional bias: polar residues. The required for phosphorylation by CSNK1E and cytoplasmic localization stretch occupies residues 1-70 (MTTLDSNNNT…TQDPARSFGT (70 aa)). A disordered region spans residues 1–120 (MTTLDSNNNT…SSRVSPSKGT (120 aa)). Residues 1–129 (MTTLDSNNNT…TSNITKLNGM (129 aa)) form a modulating region. Residues 14 to 34 (ITYIGSSGSSPSRTSPESLYS) are compositionally biased toward low complexity. The segment covering 35-48 (DSSNGSFQSLTQGC) has biased composition (polar residues). The segment at 49-285 (PTYFPPSPTG…PPRSPSPEPT (237 aa)) is crucial for activation of GJA1. Phosphoserine; by GSK3-beta is present on residues S55 and S59. A compositionally biased stretch (low complexity) spans 72–103 (PPSLSDDSSPSSASSSSSSSSSSFYNGSPPGS). Residues 130–206 (VLLCKVCGDV…VGMSRDAVRF (77 aa)) constitute a DNA-binding region (nuclear receptor). 2 NR C4-type zinc fingers span residues 133–153 (CKVCGDVASGFHYGVHACEGC) and 170–194 (CLKNENCSIVRINRNRCQQCRFKKC). Residues K192 and K193 each carry the N6-acetyllysine; by KAT5 modification. Disordered stretches follow at residues 235-287 (LCPL…PTVE), 312-337 (PGNFNANHASGSPPATTPQCWESQGC), and 357-385 (NGLRQGPSSYPPTWPSGPAHHSCHQPNSN). Over residues 253-262 (PSPPPAPAPT) the composition is skewed to pro residues. Residue T275 is modified to Phosphothreonine; by CDK1. Positions 285–615 (TVEDVISQVA…KLLSFRVDAQ (331 aa)) constitute an NR LBD domain. K401 is modified (N6-acetyllysine). C419 provides a ligand contact to heme. K592 carries the N6-acetyllysine modification. H603 is a binding site for heme.

This sequence belongs to the nuclear hormone receptor family. NR1 subfamily. In terms of assembly, binds DNA as a monomer or a homodimer. Interacts with C1D, NR2E3, SP1 and ZNHIT1. Interacts with OPHN1 (via C-terminus). Interacts with PER2; the interaction associates PER2 to BMAL1 promoter region. Interacts with CRY1. Interacts with CCAR2. Interacts with SIAH2. Interacts with FBXW7 and CDK1. Interacts with HUWE1. Interacts with NR0B2. Interacts with NFIL3. Interacts (via domain NR LBD) with HSP90AA1 and HSP90AB1. Post-translationally, ubiquitinated, leading to its proteasomal degradation. Ubiquitinated by the SCF(FBXW7) complex when phosphorylated by CDK1 leading to its proteasomal degradation. Ubiquitinated by SIAH2; leading to its proteasomal degradation. Rapidly ubiquitinated in response to inflammatory triggers and sumoylation is a prerequisite to its ubiquitination. In terms of processing, sumoylated by UBE2I, desumoylated by SENP1, and sumoylation is a prerequisite to its ubiquitination. Phosphorylated by CSNK1E; phosphorylation enhances its cytoplasmic localization. Post-translationally, undergoes lysosome-mediated degradation in a time-dependent manner in the liver.

Its subcellular location is the nucleus. It is found in the cytoplasm. The protein localises to the cell projection. It localises to the dendrite. The protein resides in the dendritic spine. Its function is as follows. Transcriptional repressor which coordinates circadian rhythm and metabolic pathways in a heme-dependent manner. Integral component of the complex transcription machinery that governs circadian rhythmicity and forms a critical negative limb of the circadian clock by directly repressing the expression of core clock components BMAL1, CLOCK and CRY1. Also regulates genes involved in metabolic functions, including lipid and bile acid metabolism, adipogenesis, gluconeogenesis and the macrophage inflammatory response. Acts as a receptor for heme which stimulates its interaction with the NCOR1/HDAC3 corepressor complex, enhancing transcriptional repression. Recognizes two classes of DNA response elements within the promoter of its target genes and can bind to DNA as either monomers or homodimers, depending on the nature of the response element. Binds as a monomer to a response element composed of the consensus half-site motif 5'-[A/G]GGTCA-3' preceded by an A/T-rich 5' sequence (RevRE), or as a homodimer to a direct repeat of the core motif spaced by two nucleotides (RevDR-2). Acts as a potent competitive repressor of ROR alpha (RORA) function and regulates the levels of its ligand heme by repressing the expression of PPARGC1A, a potent inducer of heme synthesis. Regulates lipid metabolism by repressing the expression of APOC3 and by influencing the activity of sterol response element binding proteins (SREBPs); represses INSIG2 which interferes with the proteolytic activation of SREBPs which in turn govern the rhythmic expression of enzymes with key functions in sterol and fatty acid synthesis. Regulates gluconeogenesis via repression of G6PC1 and PEPCK and adipocyte differentiation via repression of PPARG. Regulates glucagon release in pancreatic alpha-cells via the AMPK-NAMPT-SIRT1 pathway and the proliferation, glucose-induced insulin secretion and expression of key lipogenic genes in pancreatic-beta cells. Positively regulates bile acid synthesis by increasing hepatic expression of CYP7A1 via repression of NR0B2 and NFIL3 which are negative regulators of CYP7A1. Modulates skeletal muscle oxidative capacity by regulating mitochondrial biogenesis and autophagy; controls mitochondrial biogenesis and respiration by interfering with the STK11-PRKAA1/2-SIRT1-PPARGC1A signaling pathway. Represses the expression of SERPINE1/PAI1, an important modulator of cardiovascular disease and the expression of inflammatory cytokines and chemokines in macrophages. Represses gene expression at a distance in macrophages by inhibiting the transcription of enhancer-derived RNAs (eRNAs). Plays a role in the circadian regulation of body temperature and negatively regulates thermogenic transcriptional programs in brown adipose tissue (BAT); imposes a circadian oscillation in BAT activity, increasing body temperature when awake and depressing thermogenesis during sleep. In concert with NR2E3, regulates transcriptional networks critical for photoreceptor development and function. In addition to its activity as a repressor, can also act as a transcriptional activator. In the ovarian granulosa cells acts as a transcriptional activator of STAR which plays a role in steroid biosynthesis. In collaboration with SP1, activates GJA1 transcription in a heme-independent manner. Represses the transcription of CYP2B10, CYP4A10 and CYP4A14. Represses the transcription of CES2. Represses and regulates the circadian expression of TSHB in a NCOR1-dependent manner. Negatively regulates the protein stability of NR3C1 and influences the time-dependent subcellular distribution of NR3C1, thereby affecting its transcriptional regulatory activity. Plays a critical role in the circadian control of neutrophilic inflammation in the lung; under resting, non-stress conditions, acts as a rhythmic repressor to limit inflammatory activity whereas in the presence of inflammatory triggers undergoes ubiquitin-mediated degradation thereby relieving inhibition of the inflammatory response. Plays a key role in the circadian regulation of microglial activation and neuroinflammation; suppresses microglial activation through the NF-kappaB pathway in the central nervous system. Plays a role in the regulation of the diurnal rhythms of lipid and protein metabolism in the skeletal muscle via transcriptional repression of genes controlling lipid and amino acid metabolism in the muscle. In Rattus norvegicus (Rat), this protein is Nuclear receptor subfamily 1 group D member 1 (Nr1d1).